The sequence spans 461 residues: TWiK family of potassium channels protein 18 (461 aa).

At methionine 1–glycine 21 the chain is on the cytoplasmic side. Residues leucine 22–isoleucine 42 form a helical membrane-spanning segment. An N-linked (GlcNAc...) asparagine glycan is attached at asparagine 88. The segment at residues phenylalanine 116–valine 136 is an intramembrane region (pore-forming). A helical membrane pass occupies residues phenylalanine 144–leucine 164. The Cytoplasmic portion of the chain corresponds to glycine 165–serine 224. A helical transmembrane segment spans residues phenylalanine 225 to phenylalanine 245. The segment at residues phenylalanine 253–leucine 273 is an intramembrane region (pore-forming). A helical membrane pass occupies residues proline 281–isoleucine 301. The Cytoplasmic portion of the chain corresponds to glutamine 302–isoleucine 461. The tract at residues arginine 328 to lysine 347 is disordered.

This sequence belongs to the two pore domain potassium channel (TC 1.A.1.8) family. Expressed in body wall muscle.

It localises to the membrane. Outwardly rectifying potassium channel protein; activity is sharply augmented by increase in temperature. This is TWiK family of potassium channels protein 18 (twk-18) from Caenorhabditis elegans.